Here is a 158-residue protein sequence, read N- to C-terminus: Large ribosomal subunit protein uL18 (158 aa).

It belongs to the universal ribosomal protein uL18 family. Part of the 50S ribosomal subunit. Contacts the 5S and 23S rRNAs.

In terms of biological role, this is one of the proteins that bind and probably mediate the attachment of the 5S RNA into the large ribosomal subunit, where it forms part of the central protuberance. The protein is Large ribosomal subunit protein uL18 of Picrophilus torridus (strain ATCC 700027 / DSM 9790 / JCM 10055 / NBRC 100828 / KAW 2/3).